The chain runs to 1437 residues: IQ domain-containing protein N (1437 aa).

In terms of domain architecture, IQ 1 spans 84–112; it reads SRAATVIQASWKGYRLRQKLISQMTAAKA. 3 disordered regions span residues 332-353, 416-440, and 848-878; these read TSPTSPVIRLPAPVGPNSSLSN, SQAQTYTVSTSSKTSPSSPTVKPSP, and STGSRAKPDDRSVAQPQLHSHAPNKTMQNPR. The segment covering 422–440 has biased composition (low complexity); the sequence is TVSTSSKTSPSSPTVKPSP. Over residues 861–878 the composition is skewed to polar residues; it reads AQPQLHSHAPNKTMQNPR. IQ domains are found at residues 1190–1216, 1217–1239, 1240–1258, 1361–1389, and 1390–1413; these read QAVVTIQACARGYLVRRTVKVWHQWAT, IIQATWRGYRVRRNLERLFRATT, IIQAAWRGYCIRRARARQV, QHRACTIIQAAWKGYRTRRQLSQKQSAAK, and MVQAVWRGHYTRSCLTTDALLGTG.

In terms of assembly, interacts with calmodulin. Expressed in testis, in elongating spermatids (at protein level).

Functionally, essential for spermiogenesis and fertilization. May be required for manchette assembly in elongating spermatids. This is IQ domain-containing protein N (Iqcn) from Mus musculus (Mouse).